Consider the following 611-residue polypeptide: MPKRVADEIAALPEPRGPLRRPCADLSRRVRLLAPLLDHLPASSSSSSSTPLADALGAARDLLRKTRDGSKIDQAMRGDAFLDEFAGVNRQIHLALDALPYNTFHMPQEVQEQVALVHSQFQRASTRTDPPDTQLSMDLAWALTDNPSDPALLTRISHKLQLHTMADMKNESIALHNMVISTAGEPDGCVDQMSSLLKKLKDCVVTEDHANDALTTRSASIKHRSPIIPDEFRCPISLELMQDPVIVSSGQTYERSCIQKWLDSGHKTCPKTQQPLSHTSLTPNFVLKSLISQWCEANGIELPKNKQNSRDKKAAKSSDYDHAGLVSLMNRLRSGNQDEQRAAAGEIRLLAKRNVNNRICIAEAGAIPLLVNLLSSSDPRTQEHAVTALLNLSIHENNKASIVDSHAIPKIVEVLKTGSMETRENAAATLFSLSVVDENKVTIGAAGAIPPLINLLCDGSPRGKKDAATAIFNLCIYQGNKVRAVKAGIVIHLMNFLVDPTGGMIDEALSLLSILAGNPEGKIVIARSEPIPPLVEVIKTGSPRNRENAAAILWLLCSADTEQTLAAKAAGVEDALKELSETGTDRAKRKASSILELMHQANEDSLKGNGH.

Residues 227–301 enclose the U-box domain; the sequence is IIPDEFRCPI…SQWCEANGIE (75 aa). ARM repeat units lie at residues 355–394, 396–435, 437–476, and 478–517; these read VNNR…NLSI, ENNK…SLSV, DENK…NLCI, and QGNK…ILAG.

It carries out the reaction S-ubiquitinyl-[E2 ubiquitin-conjugating enzyme]-L-cysteine + [acceptor protein]-L-lysine = [E2 ubiquitin-conjugating enzyme]-L-cysteine + N(6)-ubiquitinyl-[acceptor protein]-L-lysine.. Its pathway is protein modification; protein ubiquitination. Its function is as follows. Possesses E3 ubiquitin-protein ligase in vitro. The chain is U-box domain-containing protein 12 (PUB12) from Oryza sativa subsp. japonica (Rice).